A 64-amino-acid chain; its full sequence is Conotoxin mr5.1a (64 aa).

Residues 1–19 (MRCVPVFVILLLLIASAPS) form the signal peptide. A propeptide spanning residues 20–48 (VDARLKTKDDMPLPSSHANIKRTLQIHRN) is cleaved from the precursor. Position 60 is a 4-carboxyglutamate (Glu60).

It belongs to the conotoxin T superfamily. Post-translationally, contains 2 disulfide bonds that can be either 'C1-C3, C2-C4' or 'C1-C4, C2-C3', since these disulfide connectivities have been observed for conotoxins with cysteine framework V (for examples, see AC P0DQQ7 and AC P81755). In terms of tissue distribution, expressed by the venom duct.

The protein localises to the secreted. The polypeptide is Conotoxin mr5.1a (Conus marmoreus (Marble cone)).